We begin with the raw amino-acid sequence, 28 residues long: Cyclotide ltri-A (28 aa).

The cyclopeptide (Gly-Asn) cross-link spans 1–28; the sequence is GVACGESCVYLPCFTVGCTCTSSQCFKN. Intrachain disulfides connect cysteine 4–cysteine 18, cysteine 8–cysteine 20, and cysteine 13–cysteine 25.

The protein belongs to the cyclotide family. Bracelet subfamily. This is a cyclic peptide.

Probably participates in a plant defense mechanism. The sequence is that of Cyclotide ltri-A from Leonia triandra.